Consider the following 1029-residue polypeptide: Carbamoyl phosphate synthase large chain (1029 aa).

The tract at residues Met-1 to Glu-402 is carboxyphosphate synthetic domain. Arg-129, Arg-169, Gly-175, Gly-176, Glu-208, Ile-210, Glu-215, Gly-241, Val-242, His-243, Gln-285, and Glu-299 together coordinate ATP. Residues Gln-133–Val-328 enclose the ATP-grasp 1 domain. 3 residues coordinate Mg(2+): Gln-285, Glu-299, and Asn-301. Mn(2+) contacts are provided by Gln-285, Glu-299, and Asn-301. Residues Ser-403–Asp-544 form an oligomerization domain region. Residues Glu-545 to Lys-929 form a carbamoyl phosphate synthetic domain region. The region spanning Asn-671–Val-863 is the ATP-grasp 2 domain. Residues Arg-707, Gln-747, Leu-749, Glu-754, Gly-779, Val-780, His-781, Ser-782, Gln-822, and Glu-834 each contribute to the ATP site. Residues Gln-822, Glu-834, and Asn-836 each coordinate Mg(2+). The Mn(2+) site is built by Gln-822, Glu-834, and Asn-836. One can recognise an MGS-like domain in the interval Ser-930–Ala-1028. Residues Ser-930–Gly-1029 are allosteric domain.

This sequence belongs to the CarB family. As to quaternary structure, composed of two chains; the small (or glutamine) chain promotes the hydrolysis of glutamine to ammonia, which is used by the large (or ammonia) chain to synthesize carbamoyl phosphate. Tetramer of heterodimers (alpha,beta)4. The cofactor is Mg(2+). Requires Mn(2+) as cofactor.

The enzyme catalyses hydrogencarbonate + L-glutamine + 2 ATP + H2O = carbamoyl phosphate + L-glutamate + 2 ADP + phosphate + 2 H(+). It catalyses the reaction hydrogencarbonate + NH4(+) + 2 ATP = carbamoyl phosphate + 2 ADP + phosphate + 2 H(+). The protein operates within amino-acid biosynthesis; L-arginine biosynthesis; carbamoyl phosphate from bicarbonate: step 1/1. It participates in pyrimidine metabolism; UMP biosynthesis via de novo pathway; (S)-dihydroorotate from bicarbonate: step 1/3. Its function is as follows. Large subunit of the glutamine-dependent carbamoyl phosphate synthetase (CPSase). CPSase catalyzes the formation of carbamoyl phosphate from the ammonia moiety of glutamine, carbonate, and phosphate donated by ATP, constituting the first step of 2 biosynthetic pathways, one leading to arginine and/or urea and the other to pyrimidine nucleotides. The large subunit (synthetase) binds the substrates ammonia (free or transferred from glutamine from the small subunit), hydrogencarbonate and ATP and carries out an ATP-coupled ligase reaction, activating hydrogencarbonate by forming carboxy phosphate which reacts with ammonia to form carbamoyl phosphate. The sequence is that of Carbamoyl phosphate synthase large chain from Deinococcus deserti (strain DSM 17065 / CIP 109153 / LMG 22923 / VCD115).